A 314-amino-acid polypeptide reads, in one-letter code: Homoserine kinase (314 aa).

Pro-95–Ser-105 lines the ATP pocket.

It belongs to the GHMP kinase family. Homoserine kinase subfamily.

Its subcellular location is the cytoplasm. The catalysed reaction is L-homoserine + ATP = O-phospho-L-homoserine + ADP + H(+). The protein operates within amino-acid biosynthesis; L-threonine biosynthesis; L-threonine from L-aspartate: step 4/5. Functionally, catalyzes the ATP-dependent phosphorylation of L-homoserine to L-homoserine phosphate. This Rhodococcus erythropolis (strain PR4 / NBRC 100887) protein is Homoserine kinase.